The sequence spans 340 residues: GTP 3',8-cyclase (340 aa).

The 223-residue stretch at 8 to 230 (KLGRPIRDLR…EQHFEIDPVE (223 aa)) folds into the Radical SAM core domain. Position 17 (Arg-17) interacts with GTP. Residues Cys-24 and Cys-28 each contribute to the [4Fe-4S] cluster site. Residue Tyr-30 participates in S-adenosyl-L-methionine binding. Cys-31 is a binding site for [4Fe-4S] cluster. Arg-71 is a binding site for GTP. Gly-75 provides a ligand contact to S-adenosyl-L-methionine. Residue Thr-102 participates in GTP binding. Ser-126 is a binding site for S-adenosyl-L-methionine. Residue Lys-163 participates in GTP binding. An S-adenosyl-L-methionine-binding site is contributed by Met-197. [4Fe-4S] cluster contacts are provided by Cys-261 and Cys-264. GTP is bound at residue 266 to 268 (RAR). Cys-278 contacts [4Fe-4S] cluster.

The protein belongs to the radical SAM superfamily. MoaA family. As to quaternary structure, monomer and homodimer. [4Fe-4S] cluster is required as a cofactor.

It carries out the reaction GTP + AH2 + S-adenosyl-L-methionine = (8S)-3',8-cyclo-7,8-dihydroguanosine 5'-triphosphate + 5'-deoxyadenosine + L-methionine + A + H(+). It functions in the pathway cofactor biosynthesis; molybdopterin biosynthesis. In terms of biological role, catalyzes the cyclization of GTP to (8S)-3',8-cyclo-7,8-dihydroguanosine 5'-triphosphate. The sequence is that of GTP 3',8-cyclase from Staphylococcus aureus (strain bovine RF122 / ET3-1).